Consider the following 1461-residue polypeptide: Neogenin (1461 aa).

The signal sequence occupies residues 1–33 (MAAERGARRLLSTPSFWLYCLLLLGRRAPGAAA). The Extracellular segment spans residues 34–1105 (ARSGSAPQSP…PTSPLDSNML (1072 aa)). 4 consecutive Ig-like C2-type domains span residues 52–141 (PFYF…TIIS), 152–238 (PRFT…VELK), 243–336 (PEVI…AELT), and 341–426 (PEFL…AQLI). Asparagine 73 is a glycosylation site (N-linked (GlcNAc...) asparagine). 3 disulfide bridges follow: cysteine 74/cysteine 129, cysteine 173/cysteine 221, and cysteine 270/cysteine 320. Residue asparagine 210 is glycosylated (N-linked (GlcNAc...) asparagine). Residue asparagine 326 is glycosylated (N-linked (GlcNAc...) asparagine). Cysteines 362 and 410 form a disulfide. 6 Fibronectin type-III domains span residues 441 to 535 (APRD…TQPE), 541 to 631 (PAPN…TLSD), 636 to 731 (APQN…TFES), 741 to 831 (VPSS…RPHT), 856 to 952 (PPVG…TFEL), and 957 to 1054 (PPKD…TPKA). N-linked (GlcNAc...) asparagine glycans are attached at residues asparagine 470 and asparagine 489. N-linked (GlcNAc...) asparagine glycosylation is found at asparagine 639 and asparagine 715. Asparagine 909 carries an N-linked (GlcNAc...) asparagine glycan. The segment at 1041–1097 (GPMSEAVQFRTPKADSSDKMPNDQASGSGGKGSRLPDLGSDYKPPMSGSNSPHGSPT) is disordered. Positions 1052-1061 (PKADSSDKMP) are enriched in basic and acidic residues. The segment covering 1087–1097 (SGSNSPHGSPT) has biased composition (polar residues). Residues 1106–1126 (LVIIVSVGVITIVVVVIIAVF) form a helical membrane-spanning segment. The Cytoplasmic portion of the chain corresponds to 1127-1461 (CTRRTTSHQK…MKDLNAITTA (335 aa)). 4 disordered regions span residues 1138-1160 (KRAACKSVNGSHKYKGNSKDVKP), 1174-1206 (PIDKSPDPNPIMTDTPIPRNSQDITPVDNSMDS), 1235-1276 (PKMM…PARS), and 1289-1381 (TSMS…ALPS). 2 positions are modified to phosphoserine: serine 1178 and serine 1194. Over residues 1191–1206 (PRNSQDITPVDNSMDS) the composition is skewed to polar residues. Threonine 1198 carries the phosphothreonine modification. Composition is skewed to polar residues over residues 1289-1322 (TSMSLSDRANSTESVRNTPSTDTMPASSSQTCCT) and 1330-1349 (ATSSSYLASSQEEDSGQSLP). The segment covering 1366 to 1375 (AIPPPGPPTY) has biased composition (pro residues). At serine 1401 the chain carries Phosphoserine. A Phosphothreonine modification is found at threonine 1404. Phosphoserine is present on residues serine 1432, serine 1434, and serine 1435.

It belongs to the immunoglobulin superfamily. DCC family. Interacts with MYO10. Interacts with RGMA and RGMB. Interacts with BMP2, BMP4, BMP6, and BMP7. Widely expressed and also in cancer cell lines.

The protein resides in the cell membrane. Multi-functional cell surface receptor regulating cell adhesion in many diverse developmental processes, including neural tube and mammary gland formation, myogenesis and angiogenesis. Receptor for members of the BMP, netrin, and repulsive guidance molecule (RGM) families. Netrin-Neogenin interactions result in a chemoattractive axon guidance response and cell-cell adhesion, the interaction between NEO1/Neogenin and RGMa and RGMb induces a chemorepulsive response. This is Neogenin (NEO1) from Homo sapiens (Human).